Reading from the N-terminus, the 188-residue chain is GTP cyclohydrolase 1 (188 aa).

Positions 76, 79, and 148 each coordinate Zn(2+).

It belongs to the GTP cyclohydrolase I family. As to quaternary structure, homomer.

It carries out the reaction GTP + H2O = 7,8-dihydroneopterin 3'-triphosphate + formate + H(+). It participates in cofactor biosynthesis; 7,8-dihydroneopterin triphosphate biosynthesis; 7,8-dihydroneopterin triphosphate from GTP: step 1/1. The protein is GTP cyclohydrolase 1 of Pelotomaculum thermopropionicum (strain DSM 13744 / JCM 10971 / SI).